The sequence spans 266 residues: MDTFQVIILALIQGLTEFLPISSSAHLILPSQILGWEDQGLAFDVAVHIGSLLAVVLYFRKEVVSLLTSWLASIFKGQKSDDSKLAWWIILATLPAVILGFALKDMIEVYLRGPGVIAITTVLFGLLLWWADRMSRCELTEYQTGWKKALLIGFAQALALIPGTSRSGATITAALMLGLNREAAARFSFLMSIPVILGAAILMSKDLFESGHVIDYSSLALGVGVSFVAAYTCIHLFLKIISRMGMTPFVIYRLALGALLCAFIFM.

The next 8 helical transmembrane spans lie at methionine 1–isoleucine 21, glutamine 39–phenylalanine 59, serine 83–leucine 103, leucine 111–alanine 131, threonine 144–threonine 164, alanine 183–methionine 203, serine 218–leucine 238, and methionine 246–methionine 266.

It belongs to the UppP family.

It localises to the cell inner membrane. It carries out the reaction di-trans,octa-cis-undecaprenyl diphosphate + H2O = di-trans,octa-cis-undecaprenyl phosphate + phosphate + H(+). Its function is as follows. Catalyzes the dephosphorylation of undecaprenyl diphosphate (UPP). Confers resistance to bacitracin. This Shewanella woodyi (strain ATCC 51908 / MS32) protein is Undecaprenyl-diphosphatase.